The sequence spans 140 residues: Mitochondrial import receptor subunit TOM22 homolog (140 aa).

Over residues 1-11 the composition is skewed to low complexity; it reads MAAAAAGPGAP. The segment at 1-40 is disordered; that stretch reads MAAAAAGPGAPLSADELLPKGDAEKPEEELEEEDDEELDE. The Cytoplasmic segment spans residues 1–81; it reads MAAAAAGPGA…AQKMYRFSRA (81 aa). Position 13 is a phosphoserine (Ser13). The segment covering 25 to 40 has biased composition (acidic residues); it reads KPEEELEEEDDEELDE. The tract at residues 39 to 48 is import sequence; necessary for mitochondrion outer membrane localization and integration in the TOM complex; that stretch reads DETLSERLWG. Residue Thr41 is modified to Phosphothreonine. Ser43 bears the Phosphoserine mark. The interval 81–101 is TMD; necessary for mitochondrion outer membrane localization and integration in the TOM complex; the sequence is AALWIGTTSFMILVLPVVFET. The chain crosses the membrane as a helical span at residues 82–101; sequence ALWIGTTSFMILVLPVVFET. The Mitochondrial intermembrane portion of the chain corresponds to 102 to 140; the sequence is EKLQMEQQQQLQQRQILLGPNTGLSGGMPGALPSLPGKI. A C-tail signal; necessary for mitochondrion outer membrane localization and integration in the TOM complex region spans residues 121 to 140; that stretch reads PNTGLSGGMPGALPSLPGKI.

It belongs to the Tom22 family. Forms part of the preprotein translocase complex of the outer mitochondrial membrane (TOM complex) which consists of at least 7 different proteins (TOMM5, TOMM6, TOMM7, TOMM20, TOMM22, TOMM40 and TOMM70). Interacts with PPP2R2B and TOMM40.

It is found in the mitochondrion outer membrane. Functionally, central receptor component of the translocase of the outer membrane of mitochondria (TOM complex) responsible for the recognition and translocation of cytosolically synthesized mitochondrial preproteins. Together with the peripheral receptor TOM20 functions as the transit peptide receptor and facilitates the movement of preproteins into the translocation pore. Required for the translocation across the mitochondrial outer membrane of cytochrome P450 monooxygenases. The sequence is that of Mitochondrial import receptor subunit TOM22 homolog (TOMM22) from Bos taurus (Bovine).